We begin with the raw amino-acid sequence, 101 residues long: Small ribosomal subunit protein uS14 (101 aa).

The protein belongs to the universal ribosomal protein uS14 family. As to quaternary structure, part of the 30S ribosomal subunit. Contacts proteins S3 and S10.

Binds 16S rRNA, required for the assembly of 30S particles and may also be responsible for determining the conformation of the 16S rRNA at the A site. In Albidiferax ferrireducens (strain ATCC BAA-621 / DSM 15236 / T118) (Rhodoferax ferrireducens), this protein is Small ribosomal subunit protein uS14.